Here is a 446-residue protein sequence, read N- to C-terminus: tRNA modification GTPase MnmE (446 aa).

3 residues coordinate (6S)-5-formyl-5,6,7,8-tetrahydrofolate: arginine 22, glutamate 80, and lysine 119. Residues 215-370 (GLSLVIAGRP…LKKVIKQVVG (156 aa)) form the TrmE-type G domain. Residue asparagine 225 participates in K(+) binding. GTP contacts are provided by residues 225–230 (NAGKST), 244–250 (TEIAGTT), and 269–272 (DTAG). Residue serine 229 coordinates Mg(2+). K(+) contacts are provided by threonine 244, isoleucine 246, and threonine 249. Position 250 (threonine 250) interacts with Mg(2+). Lysine 446 contacts (6S)-5-formyl-5,6,7,8-tetrahydrofolate.

It belongs to the TRAFAC class TrmE-Era-EngA-EngB-Septin-like GTPase superfamily. TrmE GTPase family. In terms of assembly, homodimer. Heterotetramer of two MnmE and two MnmG subunits. Requires K(+) as cofactor.

It localises to the cytoplasm. Exhibits a very high intrinsic GTPase hydrolysis rate. Involved in the addition of a carboxymethylaminomethyl (cmnm) group at the wobble position (U34) of certain tRNAs, forming tRNA-cmnm(5)s(2)U34. The chain is tRNA modification GTPase MnmE from Legionella pneumophila (strain Corby).